The primary structure comprises 451 residues: UDP-N-acetylmuramoylalanine--D-glutamate ligase (451 aa).

118 to 124 (GTKGKST) serves as a coordination point for ATP.

The protein belongs to the MurCDEF family.

Its subcellular location is the cytoplasm. It carries out the reaction UDP-N-acetyl-alpha-D-muramoyl-L-alanine + D-glutamate + ATP = UDP-N-acetyl-alpha-D-muramoyl-L-alanyl-D-glutamate + ADP + phosphate + H(+). Its pathway is cell wall biogenesis; peptidoglycan biosynthesis. Its function is as follows. Cell wall formation. Catalyzes the addition of glutamate to the nucleotide precursor UDP-N-acetylmuramoyl-L-alanine (UMA). This chain is UDP-N-acetylmuramoylalanine--D-glutamate ligase, found in Borreliella afzelii (strain PKo) (Borrelia afzelii).